Reading from the N-terminus, the 454-residue chain is MTTDYSNILKTIKPDGDEYRRVMELSDSLVECLNGLAEEQGIDAEAVLVGSVAKGTWLSGAADIDIFIHFPLTTPEDELKESGLRLGYGCIERFGGEAEERYASHPYVTGYIDGYEVDFVPCYRIDDASMLRSAVDRTILHTRYIQENLRDEQRDDVLLLKQFMKSTGTYGSEFRVGGFAGYLAELLVLRYGDFEGVLEGALQWRPGYIIDLEGHGTGKGFEDPLVVVDPVDRNRNVAAALTLQRMAEFVTASLNFLGNPSPEYFQPPSYSTDAAEITGTLSCRGSRVIVISTGVPDVPSDALYPQLRKTLDSVVKNLEAEGFSVLGADYWSDESKSTFMVLEMDVWELPSYLKRYGPPVWSRRHRERFLRKHERVWVEGSRLTIESPRRHRSAVSYLRDLLSKPDRLRMGKHIGVEIRRGFSVDLLDDVIGEAEKEFLEFMDAFLNPWKALER.

Residues serine 51 and lysine 54 each contribute to the ATP site. 2 residues coordinate CTP: serine 51 and lysine 54. The Mg(2+) site is built by aspartate 63, aspartate 65, and aspartate 118. Histidine 141, lysine 161, and tyrosine 170 together coordinate ATP. CTP contacts are provided by histidine 141, lysine 161, and tyrosine 170.

The protein belongs to the tRNA nucleotidyltransferase/poly(A) polymerase family. Archaeal CCA-adding enzyme subfamily. As to quaternary structure, homodimer. Requires Mg(2+) as cofactor.

The enzyme catalyses a tRNA precursor + 2 CTP + ATP = a tRNA with a 3' CCA end + 3 diphosphate. It catalyses the reaction a tRNA with a 3' CCA end + 2 CTP + ATP = a tRNA with a 3' CCACCA end + 3 diphosphate. In terms of biological role, catalyzes the addition and repair of the essential 3'-terminal CCA sequence in tRNAs without using a nucleic acid template. Adds these three nucleotides in the order of C, C, and A to the tRNA nucleotide-73, using CTP and ATP as substrates and producing inorganic pyrophosphate. tRNA 3'-terminal CCA addition is required both for tRNA processing and repair. Also involved in tRNA surveillance by mediating tandem CCA addition to generate a CCACCA at the 3' terminus of unstable tRNAs. While stable tRNAs receive only 3'-terminal CCA, unstable tRNAs are marked with CCACCA and rapidly degraded. This Methanothermobacter thermautotrophicus (strain ATCC 29096 / DSM 1053 / JCM 10044 / NBRC 100330 / Delta H) (Methanobacterium thermoautotrophicum) protein is CCA-adding enzyme.